The chain runs to 360 residues: Xanthohumol 4-O-methyltransferase (360 aa).

D227 provides a ligand contact to S-adenosyl-L-methionine. H266 functions as the Proton acceptor in the catalytic mechanism.

The protein belongs to the class I-like SAM-binding methyltransferase superfamily. Cation-independent O-methyltransferase family. Homodimer. Highly expressed in lupulin glands. Detected in cones, male flowers and roots.

It localises to the cytoplasm. It carries out the reaction xanthohumol + S-adenosyl-L-methionine = 4-O-methylxanthohumol + S-adenosyl-L-homocysteine + H(+). The catalysed reaction is desmethylxanthohumol + S-adenosyl-L-methionine = xanthohumol + S-adenosyl-L-homocysteine + H(+). The enzyme catalyses isoliquiritigenin + S-adenosyl-L-methionine = 2'-O-methylisoliquiritigenin + S-adenosyl-L-homocysteine + H(+). It catalyses the reaction trans-resveratrol + S-adenosyl-L-methionine = 3-methoxy-4',5-dihydroxy-trans-stilbene + S-adenosyl-L-homocysteine + H(+). The protein operates within secondary metabolite biosynthesis. With respect to regulation, inhibited by S-adenosyl homocysteine. Involved in the biosynthesis of prenylated phenolics natural products which contribute to the bitter taste of beer and display broad biological activities. O-methyltransferase with a low substrate selectivity. Methylates chalconaringenin, desmethylxanthohumol, xanthohumol, isoliquiritigenin, butein, 2',4-dihydroxychalcone, resveratrol, genistein and guaiacol. Catalyzes the biosynthesis of 2',4'-dihydroxy-4,6'-dimethoxy-3'-prenylchalcone (4-O-methylxanthohumol). The polypeptide is Xanthohumol 4-O-methyltransferase (Humulus lupulus (European hop)).